Reading from the N-terminus, the 618-residue chain is Phostensin (618 aa).

Residues 15–33 (RRQEEAAVRGREKAERERL) show a composition bias toward basic and acidic residues. The interval 15-505 (RRQEEAAVRG…PATADAAVPG (491 aa)) is disordered. A Phosphoserine modification is found at serine 54. The segment covering 96–109 (QQQQQQQQQQQQQQ) has biased composition (low complexity). Basic and acidic residues-rich tracts occupy residues 110-160 (RSEE…ERRL) and 173-197 (LESR…EVRK). Residues serine 131, serine 139, serine 181, and serine 201 each carry the phosphoserine modification. Phosphothreonine is present on threonine 205. At serine 231 the chain carries Phosphoserine. 2 stretches are compositionally biased toward basic and acidic residues: residues 234–245 (DSDHEKLGLTDA) and 271–289 (SGEE…EERT). Positions 308–319 (EAAGSSSGGVEA) are enriched in low complexity. The segment covering 348–358 (KVRDRTPRDTE) has biased composition (basic and acidic residues). Residues 429 to 451 (RPPPAAPLSPPPPAPPAPQPPGD) show a composition bias toward pro residues. A Phosphoserine modification is found at serine 437. Lysine 462 carries the N6-acetyllysine modification. The segment covering 485-505 (APPAAAATPATPATADAAVPG) has biased composition (low complexity). Serine 535 is subject to Phosphoserine. The tract at residues 556–594 (YQYPSESSVLEELGPEPEAPSAPSPPAAQPDDEEDEEEL) is disordered. The segment covering 572-583 (PEAPSAPSPPAA) has biased composition (pro residues). Acidic residues predominate over residues 585-594 (PDDEEDEEEL).

In terms of assembly, interacts with Protein phosphatase 1 (PP1).

It is found in the cytoplasm. It localises to the cytoskeleton. May target protein phosphatase 1 to F-actin cytoskeleton. This Sus scrofa (Pig) protein is Phostensin (PPP1R18).